The primary structure comprises 1374 residues: DNA-directed RNA polymerase subunit beta (1374 aa).

It belongs to the RNA polymerase beta chain family. In terms of assembly, the RNAP catalytic core consists of 2 alpha, 1 beta, 1 beta' and 1 omega subunit. When a sigma factor is associated with the core the holoenzyme is formed, which can initiate transcription.

The enzyme catalyses RNA(n) + a ribonucleoside 5'-triphosphate = RNA(n+1) + diphosphate. Functionally, DNA-dependent RNA polymerase catalyzes the transcription of DNA into RNA using the four ribonucleoside triphosphates as substrates. The polypeptide is DNA-directed RNA polymerase subunit beta (Rhodopseudomonas palustris (strain BisB5)).